A 160-amino-acid chain; its full sequence is Fimbrial protein (160 aa).

Residues 1–7 (MKSLQKG) constitute a propeptide, leader sequence. N-methylphenylalanine is present on Phe8. Residues 8 to 28 (FTLIELMIVVAIIGILAAFAI) form a helical membrane-spanning segment.

The protein belongs to the N-Me-Phe pilin family. In terms of assembly, the pili are polar flexible filaments of about 5.4 nanometers diameter and 2.5 micrometers average length; they consist of only a single polypeptide chain arranged in a helical configuration of five subunits per turn in the assembled pilus.

It localises to the fimbrium. It is found in the membrane. In Dichelobacter nodosus (Bacteroides nodosus), this protein is Fimbrial protein (fimA).